Reading from the N-terminus, the 339-residue chain is MNQSNASMTVIGAGSYGTALAITLARNGHQVVLWGHDPKHIATLEHDRCNVAFLPDVPFPDTLHLESDLATALAASRNILVVVPSHVFSDVLRQIKPLMRPDARLVWATKGLEAETGRLLQDVAREALGDQIPLAVISGPTFAKELAAGLPTAISLASTDETFADDLQQLLHCGKSFRVYINADFIGVQLGGAVKNVIAIGAGMSDGIGFGANARTALITRGLTEMSRLGAALGADPATFMGMAGLGDLVLTCTDNQSRNRRFGMMLGQGMDVKGAQDKIGQVVEGYRNTKEVRELAHRFGVEMPITEEIYQVLYCGKNAREAALTLLGRARKEELSRH.

Residues serine 15, tyrosine 16, histidine 36, and lysine 110 each contribute to the NADPH site. Positions 110, 139, and 141 each coordinate sn-glycerol 3-phosphate. Residue alanine 143 participates in NADPH binding. Sn-glycerol 3-phosphate contacts are provided by lysine 195, aspartate 248, serine 258, arginine 259, and asparagine 260. Lysine 195 (proton acceptor) is an active-site residue. Position 259 (arginine 259) interacts with NADPH. Residues valine 283 and glutamate 285 each contribute to the NADPH site.

The protein belongs to the NAD-dependent glycerol-3-phosphate dehydrogenase family.

It localises to the cytoplasm. The catalysed reaction is sn-glycerol 3-phosphate + NAD(+) = dihydroxyacetone phosphate + NADH + H(+). It carries out the reaction sn-glycerol 3-phosphate + NADP(+) = dihydroxyacetone phosphate + NADPH + H(+). It functions in the pathway membrane lipid metabolism; glycerophospholipid metabolism. Functionally, catalyzes the reduction of the glycolytic intermediate dihydroxyacetone phosphate (DHAP) to sn-glycerol 3-phosphate (G3P), the key precursor for phospholipid synthesis. The polypeptide is Glycerol-3-phosphate dehydrogenase [NAD(P)+] (Salmonella agona (strain SL483)).